We begin with the raw amino-acid sequence, 155 residues long: MKIGLCAFSGYKIYPGHGKTMVKIDGKSFTFLDKKCERSYLMKRNPRKVTWTVLYRRKHRKGIEEEASKKRTRRTQKFQRAIVGASLAEILAKRNMKPEVRKAQRDQAIKVAKEQKRAVKAAKKAAAPAPAKKSAPKQKAAKVTQKAAPRVGGKR.

The interval 119–155 is disordered; the sequence is VKAAKKAAAPAPAKKSAPKQKAAKVTQKAAPRVGGKR. Low complexity predominate over residues 124–133; that stretch reads KAAAPAPAKK.

The protein belongs to the eukaryotic ribosomal protein eL24 family.

The chain is Large ribosomal subunit protein eL24 (RpL24) from Drosophila melanogaster (Fruit fly).